The primary structure comprises 241 residues: Probable transcriptional regulatory protein stu0195 (241 aa).

The protein belongs to the TACO1 family. YeeN subfamily.

The protein resides in the cytoplasm. The protein is Probable transcriptional regulatory protein stu0195 of Streptococcus thermophilus (strain ATCC BAA-250 / LMG 18311).